Consider the following 510-residue polypeptide: 2,3-bisphosphoglycerate-independent phosphoglycerate mutase (510 aa).

Asp-13 and Ser-63 together coordinate Mn(2+). The Phosphoserine intermediate role is filled by Ser-63. Substrate is bound by residues His-124, 154–155 (RD), Arg-186, Arg-192, 262–265 (RADR), and Lys-334. Mn(2+)-binding residues include Asp-401, His-405, Asp-442, His-443, and His-461.

This sequence belongs to the BPG-independent phosphoglycerate mutase family. In terms of assembly, monomer. It depends on Mn(2+) as a cofactor.

The enzyme catalyses (2R)-2-phosphoglycerate = (2R)-3-phosphoglycerate. The protein operates within carbohydrate degradation; glycolysis; pyruvate from D-glyceraldehyde 3-phosphate: step 3/5. In terms of biological role, catalyzes the interconversion of 2-phosphoglycerate and 3-phosphoglycerate. In Vibrio parahaemolyticus serotype O3:K6 (strain RIMD 2210633), this protein is 2,3-bisphosphoglycerate-independent phosphoglycerate mutase.